Consider the following 557-residue polypeptide: MDIENDIRNRRIIRNISNLLDDDILCDVIITIGDGEEIKAHKTILAAGSTYFKTMFTTPMIARDLVTRVNLQMFDKDAVKNIVQYLYNRHISSMNVIDVLKCADYLLIDDLVADCESYIKDYINHDTCIYMYHKLYEMVHIPIVKYIKRMLMSNIPTLITTDAFKKTVFEILFDIISTNDNVYLYREGYKVTILLKWLEYNHITEEQLLCILSCIDIQNLDKKSRLLLYSNKTINMYPSCIQFLLDNKQNRNIIPRQLCLACHDTNYNVCNPCILVYNINTMEYSVISTIPNHIINYASAIVDNEIIIAGGYNFNNPSLNKVYKINIENKIHVELPPMIKNRCRFSLAVIDDTIYAIGGQNGTNVERTIECYTLGDDKWKMLPDMPIALSSYGMCVLDQYIYIIGGRTQHIDYTSVHTVNSIDMEEDTNISNKVIRYDTVNNIWETLPNFWTGTINPGVVSHKDDIYVVCDIKDEKNVKTCIFRYNTNTYNGWELVTTTESRLSALHTILHDNTIMMLHCYESYMLQDTFNVYTREWNHMCHQHSNSYIMHNILPIY.

A BTB domain is found at 26–95 (CDVIITIGDG…LYNRHISSMN (70 aa)). Residues 133-223 (HKLYEMVHIP…CIDIQNLDKK (91 aa)) enclose the BACK domain. 3 Kelch repeats span residues 305–352 (EIII…VIDD), 353–399 (TIYA…VLDQ), and 401–464 (IYII…SHKD).

As to quaternary structure, interacts (via BTB domain) with host CUL3.

Its subcellular location is the host cytoplasm. Functionally, probable substrate-specific adapter of CUL3-containing E3 ubiquitin-protein ligases which mediate the ubiquitination and subsequent proteasomal degradation of host target proteins. In Bos taurus (Bovine), this protein is Kelch repeat and BTB domain-containing protein 2 (KBTB2).